Here is a 353-residue protein sequence, read N- to C-terminus: Photosystem II protein D1 (353 aa).

Thr-2 carries the N-acetylthreonine modification. Thr-2 is modified (phosphothreonine). 3 helical membrane passes run 29–46, 118–133, and 142–156; these read YIGW…TATS, HFLL…EWEL, and WIAV…AATA. His-118 contacts chlorophyll a. Tyr-126 serves as a coordination point for pheophytin a. Positions 170 and 189 each coordinate [CaMn4O5] cluster. A helical membrane pass occupies residues 197-218; sequence FHMLGVAGVFGGSLFSAMHGSL. Residue His-198 coordinates chlorophyll a. A quinone-binding positions include His-215 and 264-265; that span reads SF. Position 215 (His-215) interacts with Fe cation. His-272 serves as a coordination point for Fe cation. A helical membrane pass occupies residues 274–288; the sequence is FLAAWPVVGIWFTAL. Residues His-332, Glu-333, and Ala-344 each contribute to the [CaMn4O5] cluster site. Residues 345–353 constitute a propeptide that is removed on maturation; sequence AIEAPAVNG.

Belongs to the reaction center PufL/M/PsbA/D family. As to quaternary structure, PSII is composed of 1 copy each of membrane proteins PsbA, PsbB, PsbC, PsbD, PsbE, PsbF, PsbH, PsbI, PsbJ, PsbK, PsbL, PsbM, PsbT, PsbX, PsbY, PsbZ, Psb30/Ycf12, at least 3 peripheral proteins of the oxygen-evolving complex and a large number of cofactors. It forms dimeric complexes. The cofactor is The D1/D2 heterodimer binds P680, chlorophylls that are the primary electron donor of PSII, and subsequent electron acceptors. It shares a non-heme iron and each subunit binds pheophytin, quinone, additional chlorophylls, carotenoids and lipids. D1 provides most of the ligands for the Mn4-Ca-O5 cluster of the oxygen-evolving complex (OEC). There is also a Cl(-1) ion associated with D1 and D2, which is required for oxygen evolution. The PSII complex binds additional chlorophylls, carotenoids and specific lipids.. Tyr-161 forms a radical intermediate that is referred to as redox-active TyrZ, YZ or Y-Z. In terms of processing, C-terminally processed by CTPA; processing is essential to allow assembly of the oxygen-evolving complex and thus photosynthetic growth.

It is found in the plastid. The protein resides in the chloroplast thylakoid membrane. The enzyme catalyses 2 a plastoquinone + 4 hnu + 2 H2O = 2 a plastoquinol + O2. Its function is as follows. Photosystem II (PSII) is a light-driven water:plastoquinone oxidoreductase that uses light energy to abstract electrons from H(2)O, generating O(2) and a proton gradient subsequently used for ATP formation. It consists of a core antenna complex that captures photons, and an electron transfer chain that converts photonic excitation into a charge separation. The D1/D2 (PsbA/PsbD) reaction center heterodimer binds P680, the primary electron donor of PSII as well as several subsequent electron acceptors. The sequence is that of Photosystem II protein D1 from Conocephalum japonicum (Liverwort).